Consider the following 173-residue polypeptide: Crossover junction endodeoxyribonuclease RuvC (173 aa).

Residues Asp8, Glu67, and Asp139 contribute to the active site. Residues Asp8, Glu67, and Asp139 each contribute to the Mg(2+) site.

The protein belongs to the RuvC family. As to quaternary structure, homodimer which binds Holliday junction (HJ) DNA. The HJ becomes 2-fold symmetrical on binding to RuvC with unstacked arms; it has a different conformation from HJ DNA in complex with RuvA. In the full resolvosome a probable DNA-RuvA(4)-RuvB(12)-RuvC(2) complex forms which resolves the HJ. It depends on Mg(2+) as a cofactor.

It is found in the cytoplasm. The catalysed reaction is Endonucleolytic cleavage at a junction such as a reciprocal single-stranded crossover between two homologous DNA duplexes (Holliday junction).. Functionally, the RuvA-RuvB-RuvC complex processes Holliday junction (HJ) DNA during genetic recombination and DNA repair. Endonuclease that resolves HJ intermediates. Cleaves cruciform DNA by making single-stranded nicks across the HJ at symmetrical positions within the homologous arms, yielding a 5'-phosphate and a 3'-hydroxyl group; requires a central core of homology in the junction. The consensus cleavage sequence is 5'-(A/T)TT(C/G)-3'. Cleavage occurs on the 3'-side of the TT dinucleotide at the point of strand exchange. HJ branch migration catalyzed by RuvA-RuvB allows RuvC to scan DNA until it finds its consensus sequence, where it cleaves and resolves the cruciform DNA. The chain is Crossover junction endodeoxyribonuclease RuvC from Aliivibrio salmonicida (strain LFI1238) (Vibrio salmonicida (strain LFI1238)).